We begin with the raw amino-acid sequence, 367 residues long: Dual specificity protein phosphatase 1 (367 aa).

A Rhodanese domain is found at 20–137 (RAAQCLLLDC…FSASCPELCS (118 aa)). The Tyrosine-protein phosphatase domain occupies 173–314 (GPVEILPFLY…LLQFESQVLA (142 aa)). Residue Cys258 is the Phosphocysteine intermediate of the active site. Residues Ser359 and Ser364 each carry the phosphoserine; by MAPK1 and MAPK3 modification.

The protein belongs to the protein-tyrosine phosphatase family. Non-receptor class dual specificity subfamily. Post-translationally, phosphorylation at Ser-359 and Ser-364 by MAPK1/ERK2 and MAPK3/ERK1 reduces its rate of degradation. 'Lys-48'-linked polyubiquitinated by NEURL3, leading to proteasomal degradation. In terms of tissue distribution, expressed at high levels in the lung, liver placenta and pancreas. Moderate levels seen in the heart and skeletal muscle. Lower levels found in the brain and kidney.

It is found in the nucleus. The enzyme catalyses O-phospho-L-tyrosyl-[protein] + H2O = L-tyrosyl-[protein] + phosphate. It carries out the reaction O-phospho-L-seryl-[protein] + H2O = L-seryl-[protein] + phosphate. It catalyses the reaction O-phospho-L-threonyl-[protein] + H2O = L-threonyl-[protein] + phosphate. In terms of biological role, dual specificity phosphatase that dephosphorylates MAP kinase MAPK1/ERK2 on both 'Thr-183' and 'Tyr-185', regulating its activity during the meiotic cell cycle. This Homo sapiens (Human) protein is Dual specificity protein phosphatase 1.